We begin with the raw amino-acid sequence, 435 residues long: Sex peptide receptor (435 aa).

At 1–93 (MDNYTDVLYQ…PLEYAMPLYG (93 aa)) the chain is on the extracellular side. A helical transmembrane segment spans residues 94-114 (YCMPFLLIITIISNSLIVLVL). Residues 115 to 124 (SKKSMATPTN) are Cytoplasmic-facing. Residues 125-145 (FVLMGMAICDMLTVIFPAPGL) form a helical membrane-spanning segment. Residues 146-168 (WYMYTFGNHYKPLHPVSMCLAYS) lie on the Extracellular side of the membrane. The helical transmembrane segment at 169 to 189 (IFNEIMPAMCHTISVWLTLAL) threads the bilayer. Residues 190 to 211 (AVQRYIYVCHAPMARTWCTMPR) are Cytoplasmic-facing. A helical transmembrane segment spans residues 212–229 (VRRCTAYIALLAFLHQLP). The Extracellular segment spans residues 230–276 (RFFDRTYMPLVIEWNGSPTEVCHLETSMWVHDYIGVDLYYTSYYLFR). Residues 277–297 (VLFVHLLPCIILVTLNILLFA) traverse the membrane as a helical segment. Residues 298–327 (AMRQAQERRKLLFRENRKKECKKLRETNCT) lie on the Cytoplasmic side of the membrane. The chain crosses the membrane as a helical span at residues 328–348 (TLMLIVVVSVFLLAEIPIAVV). Residues 349 to 368 (TAMHIVSSLIIEFLDYGLAN) lie on the Extracellular side of the membrane. Residues 369–389 (ICIMLTNFFLVFSYPINFGIY) form a helical membrane-spanning segment. The Cytoplasmic portion of the chain corresponds to 390–435 (CGMSRQFRETFKEIFLGRLMAKKDSSTKYSIVNGARTCTNTNETVL).

This sequence belongs to the G-protein coupled receptor 1 family. In the female, expressed in the reproductive organs; strongly expressed in the spermathecae and the lower oviduct. No expression in the male reproductive organs. In the central nervous system of both sexes, it is expressed in the brain and ventral nerve cord (VNC); strongly expressed in the ventral regions of the suboesophageal ganglion, the cervical connective and in many nerve roots of the brain and VNC. Expressed in the s-LNvs and l-LNvs pdf neurons (at protein level).

It localises to the cell membrane. Its function is as follows. Receptor for two functionally unrelated ligands; SP (A70A) for controlling reproductive behaviors and MIP for controlling sleep behavior. MIP-SPR pathway functions as a sleep homeostat which perceives the need for sleep and stabilizes it by providing a slow-acting inhibitory input to the fly arousal system that involve the pigment dispersing factor (pdf) neurons. SP-SPR is one of the multiple SP pathways that induce female post-mating behavioral responses (PMR) such as the suppression of mating receptivity and initiation of egg laying. The PMR switch is achieved by mediating the synaptic output of neurons such as those expressing fruitless (fru), double sex (dsx) and pickpocket (ppk). The sequence is that of Sex peptide receptor from Drosophila melanogaster (Fruit fly).